A 96-amino-acid chain; its full sequence is Small ribosomal subunit protein bS6 (96 aa).

It belongs to the bacterial ribosomal protein bS6 family.

In terms of biological role, binds together with bS18 to 16S ribosomal RNA. This is Small ribosomal subunit protein bS6 from Streptococcus sanguinis (strain SK36).